Here is a 234-residue protein sequence, read N- to C-terminus: Ribose-5-phosphate isomerase A (234 aa).

Substrate contacts are provided by residues 39-42 (TGST), 92-95 (DGAD), and 105-108 (KGGG). E114 (proton acceptor) is an active-site residue. K132 serves as a coordination point for substrate.

The protein belongs to the ribose 5-phosphate isomerase family. In terms of assembly, homodimer.

It carries out the reaction aldehydo-D-ribose 5-phosphate = D-ribulose 5-phosphate. It functions in the pathway carbohydrate degradation; pentose phosphate pathway; D-ribose 5-phosphate from D-ribulose 5-phosphate (non-oxidative stage): step 1/1. In terms of biological role, catalyzes the reversible conversion of ribose-5-phosphate to ribulose 5-phosphate. In Albidiferax ferrireducens (strain ATCC BAA-621 / DSM 15236 / T118) (Rhodoferax ferrireducens), this protein is Ribose-5-phosphate isomerase A.